The sequence spans 316 residues: Pantothenate kinase (316 aa).

Residue 95-102 coordinates ATP; it reads GSVAVGKS.

This sequence belongs to the prokaryotic pantothenate kinase family.

It localises to the cytoplasm. The catalysed reaction is (R)-pantothenate + ATP = (R)-4'-phosphopantothenate + ADP + H(+). It functions in the pathway cofactor biosynthesis; coenzyme A biosynthesis; CoA from (R)-pantothenate: step 1/5. The protein is Pantothenate kinase of Cronobacter sakazakii (strain ATCC BAA-894) (Enterobacter sakazakii).